The following is a 672-amino-acid chain: GPI mannosyltransferase pigv-1 (672 aa).

The Cytoplasmic segment spans residues 1–134 (MRRREPGRDV…TQRCLGFCFR (134 aa)). Positions 82–94 (REESDSSSSREDS) are enriched in basic and acidic residues. The disordered stretch occupies residues 82–115 (REESDSSSSREDSPLGSTETGESCSTTDDEESKE). Residues 97–107 (GSTETGESCST) are compositionally biased toward low complexity. Residues 135 to 155 (QLFFSRMWVFILQFIASYYAG) form a helical membrane-spanning segment. Residues 156 to 239 (DRFRTDGFNL…NGMESVFGWT (84 aa)) lie on the Extracellular side of the membrane. The helical transmembrane segment at 240-260 (FPPWVTITLAAVFVNLFCFLL) threads the bilayer. At 261-277 (CGMTLYQVVLIMTRSVK) the chain is on the cytoplasmic side. Helical transmembrane passes span 278-298 (ISLL…FSSA) and 299-319 (YSES…LFGL). Over 320-345 (RGKGFWHRMLKGFTGTICFGLTFAVR) the chain is Extracellular. A helical transmembrane segment spans residues 346–366 (SNGLLNFLYVAWIWCGTLLWD). The Cytoplasmic segment spans residues 367 to 423 (EEMPIPDCHKLISTLAATKNERYKQEWQAKFWRFQQKRKQNRKVFRWTDPNFSRCVT). The helical transmembrane segment at 424 to 444 (LFIVIVCAISATLLFFTPYVF) threads the bilayer. Residues 445 to 520 (MTNFTADEFC…WSVKFFGYWK (76 aa)) are Extracellular-facing. The helical transmembrane segment at 521–541 (IKKIPCFLMMLPAAILTVLAI) threads the bilayer. Residues 542–569 (KSSWNDVFLNKRWNNIWVLTARSDHSLP) lie on the Cytoplasmic side of the membrane. The chain crosses the membrane as a helical span at residues 570–590 (MAIHSSVLLFVAIFYINSEVF). The Extracellular portion of the chain corresponds to 591–592 (TR). The chain crosses the membrane as a helical span at residues 593-613 (IIFSSSPFIYIYIATYIDKLT). Residues 614–648 (QGTIAGNRLWQYFESPGILPFFVFRRVWQDGWRGK) are Cytoplasmic-facing. Residues 649–669 (LLYIYILGYFVFGTMAHSAWL) traverse the membrane as a helical segment. Residues 670–672 (PFT) are Extracellular-facing.

Belongs to the PIGV family. In terms of tissue distribution, expressed in epithelial tissues including the epidermis, pharynx, intestine, rectum and excretory cell during embryogenesis.

Its subcellular location is the endoplasmic reticulum membrane. It participates in glycolipid biosynthesis; glycosylphosphatidylinositol-anchor biosynthesis. Functionally, alpha-1,6-mannosyltransferase involved in glycosylphosphatidylinositol-anchor biosynthesis. Transfers the second mannose to the glycosylphosphatidylinositol during GPI precursor assembly. Required for maintenance of epithelial integrity during embryogenesis. The polypeptide is GPI mannosyltransferase pigv-1 (Caenorhabditis elegans).